Reading from the N-terminus, the 130-residue chain is Small ribosomal subunit protein uS11 (130 aa).

The protein belongs to the universal ribosomal protein uS11 family. In terms of assembly, part of the 30S ribosomal subunit. Interacts with proteins S7 and S18. Binds to IF-3.

Its function is as follows. Located on the platform of the 30S subunit, it bridges several disparate RNA helices of the 16S rRNA. Forms part of the Shine-Dalgarno cleft in the 70S ribosome. This Xylella fastidiosa (strain 9a5c) protein is Small ribosomal subunit protein uS11.